A 128-amino-acid chain; its full sequence is Ribosome-binding factor A (128 aa).

Belongs to the RbfA family. Monomer. Binds 30S ribosomal subunits, but not 50S ribosomal subunits or 70S ribosomes.

It localises to the cytoplasm. One of several proteins that assist in the late maturation steps of the functional core of the 30S ribosomal subunit. Associates with free 30S ribosomal subunits (but not with 30S subunits that are part of 70S ribosomes or polysomes). Required for efficient processing of 16S rRNA. May interact with the 5'-terminal helix region of 16S rRNA. The chain is Ribosome-binding factor A from Pseudomonas paraeruginosa (strain DSM 24068 / PA7) (Pseudomonas aeruginosa (strain PA7)).